Reading from the N-terminus, the 78-residue chain is Sec-independent protein translocase protein TatA (78 aa).

Residues 1–21 (MGSLSIWHWIVVLAVVLLLFG) traverse the membrane as a helical segment. Residues 43–78 (LAEDDEPAKTPAAPPEAPRPLPHQTSSAAEAEKKPV) form a disordered region. Over residues 54–63 (AAPPEAPRPL) the composition is skewed to pro residues.

It belongs to the TatA/E family. As to quaternary structure, the Tat system comprises two distinct complexes: a TatABC complex, containing multiple copies of TatA, TatB and TatC subunits, and a separate TatA complex, containing only TatA subunits. Substrates initially bind to the TatABC complex, which probably triggers association of the separate TatA complex to form the active translocon.

It is found in the cell inner membrane. Part of the twin-arginine translocation (Tat) system that transports large folded proteins containing a characteristic twin-arginine motif in their signal peptide across membranes. TatA could form the protein-conducting channel of the Tat system. The sequence is that of Sec-independent protein translocase protein TatA from Xanthobacter autotrophicus (strain ATCC BAA-1158 / Py2).